Here is a 179-residue protein sequence, read N- to C-terminus: Isopentenyl-diphosphate Delta-isomerase (179 aa).

Residues H24 and H30 each contribute to the Mn(2+) site. The 133-residue stretch at 28–160 folds into the Nudix hydrolase domain; that stretch reads LLHRAFSIFI…PEKFTVWFLT (133 aa). C65 is a catalytic residue. H67 serves as a coordination point for Mn(2+). Position 85 (E85) interacts with Mg(2+). 2 residues coordinate Mn(2+): E110 and E112. Residue E112 is part of the active site.

It belongs to the IPP isomerase type 1 family. As to quaternary structure, homodimer. The cofactor is Mg(2+). It depends on Mn(2+) as a cofactor.

It is found in the cytoplasm. It catalyses the reaction isopentenyl diphosphate = dimethylallyl diphosphate. It participates in isoprenoid biosynthesis; dimethylallyl diphosphate biosynthesis; dimethylallyl diphosphate from isopentenyl diphosphate: step 1/1. In terms of biological role, catalyzes the 1,3-allylic rearrangement of the homoallylic substrate isopentenyl (IPP) to its highly electrophilic allylic isomer, dimethylallyl diphosphate (DMAPP). In Serratia proteamaculans (strain 568), this protein is Isopentenyl-diphosphate Delta-isomerase.